A 285-amino-acid chain; its full sequence is Bifunctional protein FolD (285 aa).

Residues Gly-166 to Ser-168, Ser-191, and Thr-232 contribute to the NADP(+) site.

This sequence belongs to the tetrahydrofolate dehydrogenase/cyclohydrolase family. Homodimer.

The catalysed reaction is (6R)-5,10-methylene-5,6,7,8-tetrahydrofolate + NADP(+) = (6R)-5,10-methenyltetrahydrofolate + NADPH. It carries out the reaction (6R)-5,10-methenyltetrahydrofolate + H2O = (6R)-10-formyltetrahydrofolate + H(+). The protein operates within one-carbon metabolism; tetrahydrofolate interconversion. In terms of biological role, catalyzes the oxidation of 5,10-methylenetetrahydrofolate to 5,10-methenyltetrahydrofolate and then the hydrolysis of 5,10-methenyltetrahydrofolate to 10-formyltetrahydrofolate. In Chloroflexus aggregans (strain MD-66 / DSM 9485), this protein is Bifunctional protein FolD.